A 131-amino-acid chain; its full sequence is uncharacterized protein (131 aa).

Residues 112–131 (LTDNPGAVRKSQKSLIPPYN) form a disordered region.

This is an uncharacterized protein from Fowl adenovirus A serotype 1 (strain CELO / Phelps) (FAdV-1).